We begin with the raw amino-acid sequence, 440 residues long: UDP-N-acetylglucosamine 1-carboxyvinyltransferase (440 aa).

22 to 23 (KN) is a phosphoenolpyruvate binding site. Arginine 102 is a UDP-N-acetyl-alpha-D-glucosamine binding site. The active-site Proton donor is the cysteine 126. At cysteine 126 the chain carries 2-(S-cysteinyl)pyruvic acid O-phosphothioketal. Residues 131-135 (RPVDQ), aspartate 320, and isoleucine 342 contribute to the UDP-N-acetyl-alpha-D-glucosamine site.

It belongs to the EPSP synthase family. MurA subfamily.

It is found in the cytoplasm. It carries out the reaction phosphoenolpyruvate + UDP-N-acetyl-alpha-D-glucosamine = UDP-N-acetyl-3-O-(1-carboxyvinyl)-alpha-D-glucosamine + phosphate. Its pathway is cell wall biogenesis; peptidoglycan biosynthesis. Cell wall formation. Adds enolpyruvyl to UDP-N-acetylglucosamine. In Acidovorax ebreus (strain TPSY) (Diaphorobacter sp. (strain TPSY)), this protein is UDP-N-acetylglucosamine 1-carboxyvinyltransferase.